A 397-amino-acid chain; its full sequence is Phosphoglycerate kinase (397 aa).

Residues 21–23, R37, 60–63, R119, and R152 contribute to the substrate site; these read DFN and HLGR. ATP-binding positions include K203, G294, E325, and 354 to 357; that span reads GGDS.

The protein belongs to the phosphoglycerate kinase family. Monomer.

It is found in the cytoplasm. It catalyses the reaction (2R)-3-phosphoglycerate + ATP = (2R)-3-phospho-glyceroyl phosphate + ADP. It functions in the pathway carbohydrate degradation; glycolysis; pyruvate from D-glyceraldehyde 3-phosphate: step 2/5. The protein is Phosphoglycerate kinase of Chlorobaculum tepidum (strain ATCC 49652 / DSM 12025 / NBRC 103806 / TLS) (Chlorobium tepidum).